Consider the following 156-residue polypeptide: Small ribosomal subunit protein uS7 (156 aa).

It belongs to the universal ribosomal protein uS7 family. As to quaternary structure, part of the 30S ribosomal subunit. Contacts proteins S9 and S11.

One of the primary rRNA binding proteins, it binds directly to 16S rRNA where it nucleates assembly of the head domain of the 30S subunit. Is located at the subunit interface close to the decoding center, probably blocks exit of the E-site tRNA. The sequence is that of Small ribosomal subunit protein uS7 from Pseudomonas entomophila (strain L48).